The following is a 392-amino-acid chain: tRNA(Met) cytidine acetate ligase (392 aa).

ATP-binding positions include 7–20 (VVEYNPFHNGHQLH), Gly101, Asn162, and 187–188 (RI).

It belongs to the TmcAL family.

It localises to the cytoplasm. It carries out the reaction cytidine(34) in elongator tRNA(Met) + acetate + ATP = N(4)-acetylcytidine(34) in elongator tRNA(Met) + AMP + diphosphate. Functionally, catalyzes the formation of N(4)-acetylcytidine (ac(4)C) at the wobble position of elongator tRNA(Met), using acetate and ATP as substrates. First activates an acetate ion to form acetyladenylate (Ac-AMP) and then transfers the acetyl group to tRNA to form ac(4)C34. The protein is tRNA(Met) cytidine acetate ligase of Listeria welshimeri serovar 6b (strain ATCC 35897 / DSM 20650 / CCUG 15529 / CIP 8149 / NCTC 11857 / SLCC 5334 / V8).